The following is a 205-amino-acid chain: High frequency lysogenization protein HflD homolog (205 aa).

The protein belongs to the HflD family.

The protein localises to the cytoplasm. It localises to the cell inner membrane. This chain is High frequency lysogenization protein HflD homolog, found in Aliivibrio fischeri (strain MJ11) (Vibrio fischeri).